The primary structure comprises 312 residues: uncharacterized protein (312 aa).

Residues 1–14 (MSIVETCISFVSTN) lie on the Extracellular side of the membrane. The helical transmembrane segment at 15 to 35 (PFYPFCTGLLLNCVVTPLYFW) threads the bilayer. Over 36–41 (KTQNGR) the chain is Cytoplasmic. A helical membrane pass occupies residues 42-62 (IVVVSLLQFVVLYATAFISIG). At 63 to 179 (TDKSLYRNKW…LEYDQDTATE (117 aa)) the chain is on the extracellular side. In terms of domain architecture, FAD-binding FR-type spans 70-173 (NKWVALPLSK…KGPLGELEYD (104 aa)). The chain crosses the membrane as a helical span at residues 180–200 (LGIIAGGSGITPVLQVLQEII). The Cytoplasmic portion of the chain corresponds to 201–312 (PSPEDLTHIS…GNGTDKVFVF (112 aa)).

The protein belongs to the flavoprotein pyridine nucleotide cytochrome reductase family. Requires FAD as cofactor.

The protein localises to the membrane. This is an uncharacterized protein from Saccharomyces cerevisiae (strain ATCC 204508 / S288c) (Baker's yeast).